Reading from the N-terminus, the 487-residue chain is UDP-N-acetylmuramate--L-alanine ligase (487 aa).

ATP is bound at residue 122–128; the sequence is GTHGKTS.

It belongs to the MurCDEF family.

It is found in the cytoplasm. It carries out the reaction UDP-N-acetyl-alpha-D-muramate + L-alanine + ATP = UDP-N-acetyl-alpha-D-muramoyl-L-alanine + ADP + phosphate + H(+). The protein operates within cell wall biogenesis; peptidoglycan biosynthesis. Functionally, cell wall formation. This chain is UDP-N-acetylmuramate--L-alanine ligase, found in Corynebacterium urealyticum (strain ATCC 43042 / DSM 7109).